Reading from the N-terminus, the 432-residue chain is Glutamate-1-semialdehyde 2,1-aminomutase (432 aa).

Residue K272 is modified to N6-(pyridoxal phosphate)lysine.

The protein belongs to the class-III pyridoxal-phosphate-dependent aminotransferase family. HemL subfamily. In terms of assembly, homodimer. Pyridoxal 5'-phosphate is required as a cofactor.

It localises to the cytoplasm. The enzyme catalyses (S)-4-amino-5-oxopentanoate = 5-aminolevulinate. It functions in the pathway porphyrin-containing compound metabolism; protoporphyrin-IX biosynthesis; 5-aminolevulinate from L-glutamyl-tRNA(Glu): step 2/2. It participates in porphyrin-containing compound metabolism; chlorophyll biosynthesis. This is Glutamate-1-semialdehyde 2,1-aminomutase from Gloeobacter violaceus (strain ATCC 29082 / PCC 7421).